We begin with the raw amino-acid sequence, 489 residues long: Probable 26S proteasome non-ATPase regulatory subunit 3 (489 aa).

Positions 1-23 (MTQDVEMKEVPAPAPSNSVTAAT) are disordered. Positions 241 to 422 (CRYLFYLGKI…GWMVSKETGD (182 aa)) constitute a PCI domain. The interval 454 to 489 (PANSHKDKESAEKRRERQQQEQELAKHIAEEDDDEF) is disordered. Residues 457–482 (SHKDKESAEKRRERQQQEQELAKHIA) show a composition bias toward basic and acidic residues.

This sequence belongs to the proteasome subunit S3 family. The 26S proteasome is composed of a core protease, known as the 20S proteasome, capped at one or both ends by the 19S regulatory complex (RC). The RC is composed of at least 18 different subunits in two subcomplexes, the base and the lid, which form the portions proximal and distal to the 20S proteolytic core, respectively.

The protein localises to the nucleus. Its function is as follows. Acts as a regulatory subunit of the 26 proteasome which is involved in the ATP-dependent degradation of ubiquitinated proteins. The polypeptide is Probable 26S proteasome non-ATPase regulatory subunit 3 (21D7) (Daucus carota (Wild carrot)).